A 101-amino-acid chain; its full sequence is Urease subunit beta (101 aa).

Belongs to the urease beta subunit family. Heterotrimer of UreA (gamma), UreB (beta) and UreC (alpha) subunits. Three heterotrimers associate to form the active enzyme.

The protein localises to the cytoplasm. It carries out the reaction urea + 2 H2O + H(+) = hydrogencarbonate + 2 NH4(+). It functions in the pathway nitrogen metabolism; urea degradation; CO(2) and NH(3) from urea (urease route): step 1/1. The chain is Urease subunit beta from Burkholderia pseudomallei (strain 668).